The primary structure comprises 224 residues: MALTWNSIISAEKKKAYYQSMSEKIDAQRSLGKSIFPKEEHIFTAFDLTPFHDVKVVILGQDPYHGEGQAHGLSFSVLPGVKIPPSLRNMYKELAEDIPGFTIPEHGYLKTWAEQGVLLLNTVLTVEEAKAHSHAKFGWETFTDAIIKKINDDMEGVIFLLWGAHAQKKGANIDTSRHFILQAPHPSPLSAHRGFFGCKHFSQTNELLRKQNLSEINWGAVTSS.

The active-site Proton acceptor is the Asp62.

This sequence belongs to the uracil-DNA glycosylase (UDG) superfamily. UNG family.

The protein resides in the cytoplasm. The catalysed reaction is Hydrolyzes single-stranded DNA or mismatched double-stranded DNA and polynucleotides, releasing free uracil.. Functionally, excises uracil residues from the DNA which can arise as a result of misincorporation of dUMP residues by DNA polymerase or due to deamination of cytosine. This Aliivibrio fischeri (strain ATCC 700601 / ES114) (Vibrio fischeri) protein is Uracil-DNA glycosylase.